We begin with the raw amino-acid sequence, 328 residues long: Acetyl-coenzyme A carboxylase carboxyl transferase subunit alpha (328 aa).

The CoA carboxyltransferase C-terminal domain occupies 42–296 (SFKEQLSILK…KESLISELHF (255 aa)).

This sequence belongs to the AccA family. Acetyl-CoA carboxylase is a heterohexamer composed of biotin carboxyl carrier protein (accB), biotin carboxylase (accC) and two subunits each of ACCase subunit alpha (accA) and ACCase subunit beta (accD).

It is found in the plastid. The protein resides in the chloroplast. The enzyme catalyses N(6)-carboxybiotinyl-L-lysyl-[protein] + acetyl-CoA = N(6)-biotinyl-L-lysyl-[protein] + malonyl-CoA. Its pathway is lipid metabolism; malonyl-CoA biosynthesis; malonyl-CoA from acetyl-CoA: step 1/1. Functionally, component of the acetyl coenzyme A carboxylase (ACC) complex. First, biotin carboxylase catalyzes the carboxylation of biotin on its carrier protein (BCCP) and then the CO(2) group is transferred by the carboxyltransferase to acetyl-CoA to form malonyl-CoA. The polypeptide is Acetyl-coenzyme A carboxylase carboxyl transferase subunit alpha (Gracilaria tenuistipitata var. liui (Red alga)).